Consider the following 283-residue polypeptide: Phosphatidylglycerol--prolipoprotein diacylglyceryl transferase (283 aa).

Transmembrane regions (helical) follow at residues 20–40 (IGGF…IIGL), 60–80 (LVIW…VAFE), 94–114 (IWQG…AILV), and 121–141 (LSFW…QAIG). Arg142 provides a ligand contact to a 1,2-diacyl-sn-glycero-3-phospho-(1'-sn-glycerol). The next 3 membrane-spanning stretches (helical) occupy residues 183 to 203 (FLYE…LFFY), 214 to 234 (GTIT…IEGL), and 248 to 268 (QVVS…LYLL).

The protein belongs to the Lgt family.

The protein resides in the cell inner membrane. It catalyses the reaction L-cysteinyl-[prolipoprotein] + a 1,2-diacyl-sn-glycero-3-phospho-(1'-sn-glycerol) = an S-1,2-diacyl-sn-glyceryl-L-cysteinyl-[prolipoprotein] + sn-glycerol 1-phosphate + H(+). It functions in the pathway protein modification; lipoprotein biosynthesis (diacylglyceryl transfer). In terms of biological role, catalyzes the transfer of the diacylglyceryl group from phosphatidylglycerol to the sulfhydryl group of the N-terminal cysteine of a prolipoprotein, the first step in the formation of mature lipoproteins. This chain is Phosphatidylglycerol--prolipoprotein diacylglyceryl transferase, found in Synechocystis sp. (strain ATCC 27184 / PCC 6803 / Kazusa).